Reading from the N-terminus, the 366-residue chain is uncharacterized protein (366 aa).

The OBG-type G domain maps to 63 to 288; that stretch reads ARVAMVGFPS…LLEKMWEYLA (226 aa). GTP contacts are provided by residues 69-76, 115-119, and 246-249; these read GFPSVGKS, DLPGI, and NKVD. The TGS domain occupies 288–365; it reads ALVRVYTKKP…DHEDVIQIVK (78 aa).

Belongs to the TRAFAC class OBG-HflX-like GTPase superfamily. OBG GTPase family.

This is an uncharacterized protein from Caenorhabditis elegans.